The chain runs to 147 residues: Protein LOL4 (147 aa).

Putative zinc finger regions lie at residues Q4 to V34, E44 to T74, and H82 to V112.

The protein localises to the nucleus. Its function is as follows. Putative zinc finger that may be involved in programmed cell death and defense response. The chain is Protein LOL4 (LOL4) from Oryza sativa subsp. japonica (Rice).